Here is a 168-residue protein sequence, read N- to C-terminus: Transcription antitermination protein NusB (168 aa).

The disordered stretch occupies residues arginine 147 to lysine 168. The segment covering serine 158–lysine 168 has biased composition (basic and acidic residues).

The protein belongs to the NusB family.

Involved in transcription antitermination. Required for transcription of ribosomal RNA (rRNA) genes. Binds specifically to the boxA antiterminator sequence of the ribosomal RNA (rrn) operons. In Chlorobium phaeobacteroides (strain BS1), this protein is Transcription antitermination protein NusB.